A 301-amino-acid chain; its full sequence is uncharacterized protein (301 aa).

This is an uncharacterized protein from Escherichia coli (strain K12).